The sequence spans 158 residues: Large ribosomal subunit protein uL16 (158 aa).

This sequence belongs to the universal ribosomal protein uL16 family. As to quaternary structure, part of the 50S ribosomal subunit.

Functionally, binds 23S rRNA and is also seen to make contacts with the A and possibly P site tRNAs. The protein is Large ribosomal subunit protein uL16 of Parasynechococcus marenigrum (strain WH8102).